Here is a 529-residue protein sequence, read N- to C-terminus: Peptide chain release factor 3 (529 aa).

Residues 11 to 280 (ATRRTFAIIS…GLVQWAPPPQ (270 aa)) form the tr-type G domain. GTP-binding positions include 20–27 (SHPDAGKT), 88–92 (DTPGH), and 142–145 (NKLD).

This sequence belongs to the TRAFAC class translation factor GTPase superfamily. Classic translation factor GTPase family. PrfC subfamily.

It localises to the cytoplasm. Increases the formation of ribosomal termination complexes and stimulates activities of RF-1 and RF-2. It binds guanine nucleotides and has strong preference for UGA stop codons. It may interact directly with the ribosome. The stimulation of RF-1 and RF-2 is significantly reduced by GTP and GDP, but not by GMP. In Alcanivorax borkumensis (strain ATCC 700651 / DSM 11573 / NCIMB 13689 / SK2), this protein is Peptide chain release factor 3.